We begin with the raw amino-acid sequence, 92 residues long: Small ribosomal subunit protein uS17 (92 aa).

This sequence belongs to the universal ribosomal protein uS17 family. As to quaternary structure, part of the 30S ribosomal subunit.

Its function is as follows. One of the primary rRNA binding proteins, it binds specifically to the 5'-end of 16S ribosomal RNA. This is Small ribosomal subunit protein uS17 from Corynebacterium diphtheriae (strain ATCC 700971 / NCTC 13129 / Biotype gravis).